The chain runs to 246 residues: ATP synthase subunit b 1 (246 aa).

The chain crosses the membrane as a helical span at residues W5–Y27.

Belongs to the ATPase B chain family. In terms of assembly, F-type ATPases have 2 components, F(1) - the catalytic core - and F(0) - the membrane proton channel. F(1) has five subunits: alpha(3), beta(3), gamma(1), delta(1), epsilon(1). F(0) has three main subunits: a(1), b(2) and c(10-14). The alpha and beta chains form an alternating ring which encloses part of the gamma chain. F(1) is attached to F(0) by a central stalk formed by the gamma and epsilon chains, while a peripheral stalk is formed by the delta and b chains.

It is found in the cell inner membrane. F(1)F(0) ATP synthase produces ATP from ADP in the presence of a proton or sodium gradient. F-type ATPases consist of two structural domains, F(1) containing the extramembraneous catalytic core and F(0) containing the membrane proton channel, linked together by a central stalk and a peripheral stalk. During catalysis, ATP synthesis in the catalytic domain of F(1) is coupled via a rotary mechanism of the central stalk subunits to proton translocation. In terms of biological role, component of the F(0) channel, it forms part of the peripheral stalk, linking F(1) to F(0). This is ATP synthase subunit b 1 from Rhodopirellula baltica (strain DSM 10527 / NCIMB 13988 / SH1).